Reading from the N-terminus, the 357-residue chain is Crh-like protein 1 (357 aa).

Positions 1-17 (MMLPLLAVSAFASLGAA) are cleaved as a signal peptide. The GH16 domain occupies 20–220 (YTSCNPTNSL…WAGGETDYDE (201 aa)). 2 N-linked (GlcNAc...) asparagine glycosylation sites follow: N52 and N92. E109 serves as the catalytic Nucleophile. E113 functions as the Proton donor in the catalytic mechanism. Position 113 (E113) interacts with chitin. N131 carries an N-linked (GlcNAc...) asparagine glycan. The chitin site is built by K193, W197, and T208. N-linked (GlcNAc...) asparagine glycosylation is found at N242 and N257. The GPI-anchor amidated glycine moiety is linked to residue G326. Residues 327 to 357 (SASAVFTGAAVTNLPSFFFTVFFALAIALAF) constitute a propeptide, removed in mature form. The chain crosses the membrane as a helical span at residues 337 to 357 (VTNLPSFFFTVFFALAIALAF).

It belongs to the glycosyl hydrolase 16 family. CRH1 subfamily. In terms of processing, the GPI-like anchor contains a phosphoceramide lipid group. The anchor position has not been determined.

The protein resides in the cell membrane. It localises to the secreted. Its subcellular location is the cell wall. It catalyses the reaction Random endo-hydrolysis of N-acetyl-beta-D-glucosaminide (1-&gt;4)-beta-linkages in chitin and chitodextrins.. Its function is as follows. Dual chitinase/transglycosylase that plays a role in cell wall architecture. Chitinase and transglycosylase activities are coupled. Required for the polysaccharide cross-linking at the septa and the cell wall. More specifically, transfers chitin to 1,6-beta-glucan in the cell wall. The chain is Crh-like protein 1 from Aspergillus fumigatus (strain ATCC MYA-4609 / CBS 101355 / FGSC A1100 / Af293) (Neosartorya fumigata).